Reading from the N-terminus, the 595-residue chain is Beta-(1--&gt;2)glucan export ATP-binding/permease protein NdvA (595 aa).

The 281-residue stretch at 21-301 (SLLICAANVM…MSNFINLTVS (281 aa)) folds into the ABC transmembrane type-1 domain. 5 consecutive transmembrane segments (helical) span residues 22–42 (LLICAANVMLAIITIAEPILF), 55–75 (IILTLTIWVCFGISHIIAYVL), 128–148 (AIWLDFMRQHLSTLVALFILI), 152–172 (FNMNWRLSIVLVVLAIIYVLI), and 248–268 (TASTISIVCVLLLGAFFVAKG). The 235-residue stretch at 335–569 (VQFHHVTYKF…GGRFYKLLKA (235 aa)) folds into the ABC transporter domain. Residue 368–375 (GPTGAGKT) coordinates ATP.

It belongs to the ABC transporter superfamily. Beta-(1--&gt;2)glucan exporter (TC 3.A.1.108.1) family. In terms of assembly, homodimer.

Its subcellular location is the cell inner membrane. The enzyme catalyses [(1-&gt;2)-beta-D-glucosyl](n)(in) + ATP + H2O = [(1-&gt;2)-beta-D-glucosyl](n)(out) + ADP + phosphate + H(+). Its function is as follows. Involved in beta-(1--&gt;2)glucan export. Transmembrane domains (TMD) form a pore in the inner membrane and the ATP-binding domain (NBD) is responsible for energy generation. The protein is Beta-(1--&gt;2)glucan export ATP-binding/permease protein NdvA of Bartonella quintana (strain Toulouse) (Rochalimaea quintana).